The chain runs to 230 residues: Cytidylate kinase (230 aa).

16–24 provides a ligand contact to ATP; that stretch reads GPASAGKST.

The protein belongs to the cytidylate kinase family. Type 1 subfamily.

The protein localises to the cytoplasm. It catalyses the reaction CMP + ATP = CDP + ADP. It carries out the reaction dCMP + ATP = dCDP + ADP. This is Cytidylate kinase from Lactobacillus johnsonii (strain CNCM I-12250 / La1 / NCC 533).